The sequence spans 330 residues: MLHPALALVPGEPAGVGPELCVRLVQQPRQDCRLVAFADPATLQAAAAALDLPLRLLPPEALAERPGDLPIQAQCHVHPTRFGHPDPANAPAVIAALCEAASDCVHGALHGIVTGPVHKAVINQSGIHYTGTTELLAAQAECDVVMMLANPHLRVALVTTHLPLRDVPDVITAALLERCLRIVNTAMCGDFGIATPRIAVLGLNPHAGEGGYLGREELDVVIPVLQRLRAEGMVLLGPLSADTAFLPTKLIGYDAVVAMYHDQGLPVLKHSGFEQAVNITLGLPYPRVAVDHGTALDLAGRGVADPSSLFAATALCARLAVSRALLSVRS.

Thr133 lines the substrate pocket. A divalent metal cation is bound by residues His161, His206, and His261. Substrate-binding residues include Lys269, Asn278, and Arg287.

This sequence belongs to the PdxA family. As to quaternary structure, homodimer. Zn(2+) serves as cofactor. The cofactor is Mg(2+). Requires Co(2+) as cofactor.

It is found in the cytoplasm. The catalysed reaction is 4-(phosphooxy)-L-threonine + NAD(+) = 3-amino-2-oxopropyl phosphate + CO2 + NADH. It participates in cofactor biosynthesis; pyridoxine 5'-phosphate biosynthesis; pyridoxine 5'-phosphate from D-erythrose 4-phosphate: step 4/5. Functionally, catalyzes the NAD(P)-dependent oxidation of 4-(phosphooxy)-L-threonine (HTP) into 2-amino-3-oxo-4-(phosphooxy)butyric acid which spontaneously decarboxylates to form 3-amino-2-oxopropyl phosphate (AHAP). The polypeptide is 4-hydroxythreonine-4-phosphate dehydrogenase (Xylella fastidiosa (strain 9a5c)).